The primary structure comprises 775 residues: Zinc finger protein GLIS3 (775 aa).

Disordered stretches follow at residues 121–147 and 282–314; these read TESS…KKRA and PGST…AHLH. A compositionally biased stretch (low complexity) spans 123 to 133; it reads SSHSPYPSPRH. Basic residues predominate over residues 134 to 147; the sequence is SSTRSHSARSKKRA. The segment covering 289–307 has biased composition (pro residues); the sequence is PPAPPLPPLPPPPGPPPPY. A C2H2-type 1 zinc finger spans residues 345 to 370; it reads HCCRWIDCSALYDQQEELVRHIEKVH. Residues 379–406 form a C2H2-type 2; atypical zinc finger; that stretch reads FTCFWAGCPRRYKPFNARYKLLIHMRVH. C2H2-type zinc fingers lie at residues 412–436, 442–466, and 472–496; these read NKCT…LRSH, YLCQ…QRTH, and YACQ…VKAH. Disordered stretches follow at residues 485-512 and 529-665; these read DPSS…SSTE and PATS…QPNG. A Bipartite nuclear localization signal motif is present at residues 491–507; sequence KHVKAHSSKEQQARKKL. The segment covering 497–512 has biased composition (basic and acidic residues); sequence SSKEQQARKKLRSSTE. Polar residues-rich tracts occupy residues 557-567, 588-600, and 632-663; these read IFSSNYSSRSG, VQGS…SQLP, and SILQ…SFQP.

It belongs to the GLI C2H2-type zinc-finger protein family. As to expression, in the adult, expressed at high levels in the kidney and at lower levels in the brain, skeletal muscle, pancreas, liver, lung, thymus and ovary.

It is found in the nucleus. Functionally, acts both as a repressor and an activator of transcription. Binds to the consensus sequence 5'-GACCACCCAC-3'. This is Zinc finger protein GLIS3 (GLIS3) from Homo sapiens (Human).